Consider the following 208-residue polypeptide: GTP cyclohydrolase-2 (208 aa).

A GTP-binding site is contributed by 49–53 (RLHSE). 3 residues coordinate Zn(2+): Cys-54, Cys-65, and Cys-67. Residues Gln-70, 92 to 94 (EGR), and Thr-114 each bind GTP. Catalysis depends on Asp-126, which acts as the Proton acceptor. The active-site Nucleophile is the Arg-128. GTP is bound by residues Thr-149 and Lys-154.

This sequence belongs to the GTP cyclohydrolase II family. The cofactor is Zn(2+).

It catalyses the reaction GTP + 4 H2O = 2,5-diamino-6-hydroxy-4-(5-phosphoribosylamino)-pyrimidine + formate + 2 phosphate + 3 H(+). The protein operates within cofactor biosynthesis; riboflavin biosynthesis; 5-amino-6-(D-ribitylamino)uracil from GTP: step 1/4. In terms of biological role, catalyzes the conversion of GTP to 2,5-diamino-6-ribosylamino-4(3H)-pyrimidinone 5'-phosphate (DARP), formate and pyrophosphate. The chain is GTP cyclohydrolase-2 from Azotobacter vinelandii (strain DJ / ATCC BAA-1303).